The primary structure comprises 128 residues: Fluoride-specific ion channel FluC (128 aa).

The next 4 helical transmembrane spans lie at 4–24 (VFLL…VSTW), 35–55 (FGIL…WSIA), 67–87 (FLFT…LDTM), and 99–119 (LLNV…GIIL). Na(+) is bound by residues G74 and T77.

Belongs to the fluoride channel Fluc/FEX (TC 1.A.43) family.

Its subcellular location is the cell inner membrane. It catalyses the reaction fluoride(in) = fluoride(out). Na(+) is not transported, but it plays an essential structural role and its presence is essential for fluoride channel function. Functionally, fluoride-specific ion channel. Important for reducing fluoride concentration in the cell, thus reducing its toxicity. The protein is Fluoride-specific ion channel FluC of Parabacteroides distasonis (strain ATCC 8503 / DSM 20701 / CIP 104284 / JCM 5825 / NCTC 11152).